The sequence spans 398 residues: 1-deoxy-D-xylulose 5-phosphate reductoisomerase (398 aa).

Residues Thr10, Gly11, Ser12, Ile13, Gly36, Lys37, Asn38, and Asn124 each contribute to the NADPH site. Position 125 (Lys125) interacts with 1-deoxy-D-xylulose 5-phosphate. An NADPH-binding site is contributed by Glu126. Asp150 contributes to the Mn(2+) binding site. 4 residues coordinate 1-deoxy-D-xylulose 5-phosphate: Ser151, Glu152, Ser186, and His209. Glu152 lines the Mn(2+) pocket. Residue Gly215 participates in NADPH binding. 1-deoxy-D-xylulose 5-phosphate contacts are provided by Ser222, Asn227, Lys228, and Glu231. Glu231 is a Mn(2+) binding site.

The protein belongs to the DXR family. As to quaternary structure, homodimer. It depends on Mg(2+) as a cofactor. Mn(2+) serves as cofactor.

The enzyme catalyses 2-C-methyl-D-erythritol 4-phosphate + NADP(+) = 1-deoxy-D-xylulose 5-phosphate + NADPH + H(+). It participates in isoprenoid biosynthesis; isopentenyl diphosphate biosynthesis via DXP pathway; isopentenyl diphosphate from 1-deoxy-D-xylulose 5-phosphate: step 1/6. Its function is as follows. Catalyzes the NADPH-dependent rearrangement and reduction of 1-deoxy-D-xylulose-5-phosphate (DXP) to 2-C-methyl-D-erythritol 4-phosphate (MEP). The polypeptide is 1-deoxy-D-xylulose 5-phosphate reductoisomerase (Escherichia coli O157:H7).